The chain runs to 201 residues: LexA repressor 1 (201 aa).

Residues 27-47 constitute a DNA-binding region (H-T-H motif); the sequence is LAEIAQAFGFASRNAAQKHVQ. Active-site for autocatalytic cleavage activity residues include Ser122 and Lys159.

Belongs to the peptidase S24 family. As to quaternary structure, homodimer.

It catalyses the reaction Hydrolysis of Ala-|-Gly bond in repressor LexA.. In terms of biological role, represses a number of genes involved in the response to DNA damage (SOS response), including recA and lexA. In the presence of single-stranded DNA, RecA interacts with LexA causing an autocatalytic cleavage which disrupts the DNA-binding part of LexA, leading to derepression of the SOS regulon and eventually DNA repair. In Xanthomonas oryzae pv. oryzae (strain KACC10331 / KXO85), this protein is LexA repressor 1.